The following is a 73-amino-acid chain: Tetrahydromethanopterin S-methyltransferase subunit F (73 aa).

Residues 52–72 (IGFAAGFLFSLLMVIVLPLLF) traverse the membrane as a helical segment.

The protein belongs to the MtrF family. As to quaternary structure, the complex is composed of 8 subunits; MtrA, MtrB, MtrC, MtrD, MtrE, MtrF, MtrG and MtrH.

The protein resides in the cell membrane. It carries out the reaction 5-methyl-5,6,7,8-tetrahydromethanopterin + coenzyme M + 2 Na(+)(in) = 5,6,7,8-tetrahydromethanopterin + methyl-coenzyme M + 2 Na(+)(out). The protein operates within one-carbon metabolism; methanogenesis from CO(2); methyl-coenzyme M from 5,10-methylene-5,6,7,8-tetrahydromethanopterin: step 2/2. Functionally, part of a complex that catalyzes the formation of methyl-coenzyme M and tetrahydromethanopterin from coenzyme M and methyl-tetrahydromethanopterin. This is an energy-conserving, sodium-ion translocating step. In Methanosarcina barkeri (strain Fusaro / DSM 804), this protein is Tetrahydromethanopterin S-methyltransferase subunit F.